A 66-amino-acid polypeptide reads, in one-letter code: MPKQKTHRGAAKRFKKTGSGKLKRDHAYTSHLFANKSTKAKRKLRKAGLVSAGDYKRIRQMLDNLK.

Basic residues predominate over residues 1-24 (MPKQKTHRGAAKRFKKTGSGKLKR). The segment at 1-26 (MPKQKTHRGAAKRFKKTGSGKLKRDH) is disordered.

Belongs to the bacterial ribosomal protein bL35 family.

In Bacillus cytotoxicus (strain DSM 22905 / CIP 110041 / 391-98 / NVH 391-98), this protein is Large ribosomal subunit protein bL35.